A 1275-amino-acid polypeptide reads, in one-letter code: Membrane-associated guanylate kinase, WW and PDZ domain-containing protein 2 (1275 aa).

The 85-residue stretch at 17–101 (ESVIGRNPEG…PLRLKCVKQG (85 aa)) folds into the PDZ 1 domain. The region spanning 109–283 (RHYLNLRFQK…PVYSQPEELK (175 aa)) is the Guanylate kinase-like domain. The segment at 203–305 (LPGATPSAEG…ENEDSDPLPD (103 aa)) is disordered. A compositionally biased stretch (basic and acidic residues) spans 280–295 (EELKDQMDDTKPTKPE). 2 consecutive WW domains span residues 301 to 334 (DPLPDNWEMAYTEKGEVYFIDHNTKTTSWLDPRL) and 347 to 380 (NELPYGWEKIDDPIYGTYYVDHINRRTQFENPVL). The tract at residues 301-380 (DPLPDNWEMA…RRTQFENPVL (80 aa)) is interaction with DDN. Residue Tyr-361 is modified to Phosphotyrosine. PDZ domains follow at residues 425–509 (STTL…CRGY) and 604–682 (TLTI…HRGG). Residue Ser-685 is modified to Phosphoserine. Positions 698-740 (ENQGSPQTSLSAPAVPQNLPFPPALHRSSFPDSTEAFDPRKPD) are disordered. The span at 699-708 (NQGSPQTSLS) shows a compositional bias: polar residues. In terms of domain architecture, PDZ 4 spans 777 to 859 (DVHLRRMESG…NGQVNLTVRR (83 aa)). At Tyr-826 the chain carries Phosphotyrosine. The disordered stretch occupies residues 868–912 (CPENGRSPGSVSTHHSSPRSDYATYSNSNHAAPSSNASPPEGFAS). 2 positions are modified to phosphoserine: Ser-883 and Ser-884. A compositionally biased stretch (low complexity) spans 893 to 907 (SNSNHAAPSSNASPP). The 91-residue stretch at 919 to 1009 (DVVIHRKENE…SVTLRIIPQE (91 aa)) folds into the PDZ 5 domain. Residues 1010-1040 (ELNSPTSAPSSEKQSPMAQQHSPLAQQSPLA) show a composition bias toward polar residues. A disordered region spans residues 1010–1128 (ELNSPTSAPS…PDTRQYPLSD (119 aa)). Ser-1013 is subject to Phosphoserine. Residues 1067-1083 (NSYRSEVKARQDVKPDI) are compositionally biased toward basic and acidic residues. In terms of domain architecture, PDZ 6 spans 1139–1221 (TVDMEKGAKG…RVRLLLKRGT (83 aa)).

It belongs to the MAGUK family. In terms of assembly, interacts (via its WW domains) with DRPLA. Interacts (via its second PDZ domain) with PTEN (via unphosphorylated C-terminus); this interaction diminishes the degradation rate of PTEN. Interacts (via guanylate kinase domain) with DLGAP1. Interacts (via the PDZ domains) with GRIN2A, GRID2 and NLGN1. Interacts with CTNND2, CTNNB1 and MAGUIN-1. Interacts with ACVR2A, SMAD2 and SMAD3. Part of a complex consisting of MAGI2/ARIP1, ACVR2A, ACVR1B and SMAD3. May interact with HTR2A. Interacts with RAPGEF2. Identified in a complex with ACTN4, CASK, IQGAP1, NPHS1, SPTAN1 and SPTBN1. Interacts with DDN. Found in a complex, at least composed of KIDINS220, MAGI2, NTRK1 and RAPGEF2; the complex is mainly formed at late endosomes in a NGF-dependent manner. Interacts with RAPGEF2; the interaction occurs before or after nerve growth factor (NGF) stimulation. Interacts (via PDZ domain) with KIDINS220 (via C-terminal domain). Interacts with IGSF9 and HTR4. Interacts with DLL1. Found in a complex with IGSF9B and NLGN2; the interaction with IGSF9B is mediated via the PDZ 5 and PDZ 6 domains, while the interaction with NLGN2 is mediated via the WW1, WW2 and PDZ2 domains. Interacts (via PDZ 6 domain) with USH1G (via SAM domain); the interaction is triggered by phosphorylation of USH1G by CK2 and negatively regulates MAGI2-mediated endocytosis. In terms of tissue distribution, expressed throughout the retina except in the nuclear layers and the photoreceptor outer segments (at protein level). Highest retinal expression is observed in the outer plexiform layer, the outer limiting membrane and the inner segment of photoreceptor cells (at protein level). Expressed in brain.

Its subcellular location is the cytoplasm. It localises to the late endosome. The protein resides in the synapse. The protein localises to the synaptosome. It is found in the cell membrane. Its subcellular location is the cytoskeleton. It localises to the microtubule organizing center. The protein resides in the centrosome. The protein localises to the cell projection. It is found in the cilium. Its subcellular location is the centriole. It localises to the photoreceptor inner segment. The protein resides in the photoreceptor outer segment. In terms of biological role, seems to act as a scaffold molecule at synaptic junctions by assembling neurotransmitter receptors and cell adhesion proteins. Plays a role in nerve growth factor (NGF)-induced recruitment of RAPGEF2 to late endosomes and neurite outgrowth. May play a role in regulating activin-mediated signaling in neuronal cells. Enhances the ability of PTEN to suppress AKT1 activation. Plays a role in receptor-mediated clathrin-dependent endocytosis which is required for ciliogenesis. This is Membrane-associated guanylate kinase, WW and PDZ domain-containing protein 2 (Magi2) from Mus musculus (Mouse).